We begin with the raw amino-acid sequence, 200 residues long: Chromophore lyase CpcT/CpeT 2 (200 aa).

The protein belongs to the CpcT/CpeT biliprotein lyase family.

Functionally, covalently attaches a chromophore to Cys residue(s) of phycobiliproteins. The polypeptide is Chromophore lyase CpcT/CpeT 2 (Microcystis aeruginosa (strain NIES-843 / IAM M-2473)).